The following is a 93-amino-acid chain: Small ribosomal subunit protein bS6 (93 aa).

The protein belongs to the bacterial ribosomal protein bS6 family.

In terms of biological role, binds together with bS18 to 16S ribosomal RNA. In Treponema pallidum (strain Nichols), this protein is Small ribosomal subunit protein bS6 (rpsF).